A 1199-amino-acid polypeptide reads, in one-letter code: Metabotropic glutamate receptor 1 (1199 aa).

The N-terminal stretch at 1 to 20 (MVRLLLIFFPMIFLEMSILP) is a signal peptide. The Extracellular portion of the chain corresponds to 21–592 (RMPDRKVLLA…IRYLEWSDIE (572 aa)). A disulfide bond links C67 and C109. Residue Y74 participates in L-glutamate binding. Residue N98 is glycosylated (N-linked (GlcNAc...) asparagine). L-glutamate-binding positions include S165 and 186-188 (SAT). An N-linked (GlcNAc...) asparagine glycan is attached at N223. Y236 is an L-glutamate binding site. Residues C289 and C291 are joined by a disulfide bond. D318 is an L-glutamate binding site. C378 and C394 are disulfide-bonded. The N-linked (GlcNAc...) asparagine glycan is linked to N397. K409 contacts L-glutamate. C432 and C439 are disulfide-bonded. The N-linked (GlcNAc...) asparagine glycan is linked to N515. A helical membrane pass occupies residues 593–615 (SIIAIAFSCLGILVTLFVTLIFV). At 616–629 (LYRDTPVVKSSSRE) the chain is on the cytoplasmic side. A helical transmembrane segment spans residues 630–650 (LCYIILAGIFLGYVCPFTLIA). Residues 651–658 (KPTTTSCY) lie on the Extracellular side of the membrane. A disulfide bridge links C657 with C746. A helical membrane pass occupies residues 659-680 (LQRLLVGLSSAMCYSALVTKTN). Over 681–703 (RIARILAGSKKKICTRKPRFMSA) the chain is Cytoplasmic. Residues 704 to 727 (WAQVIIASILISVQLTLVVTLIIM) form a helical membrane-spanning segment. Residues 728 to 750 (EPPMPILSYPSIKEVYLICNTSN) lie on the Extracellular side of the membrane. An N-linked (GlcNAc...) asparagine glycan is attached at N747. Residues 751 to 772 (LGVVAPVGYNGLLIMSCTYYAF) traverse the membrane as a helical segment. The Cytoplasmic portion of the chain corresponds to 773 to 785 (KTRNVPANFNEAK). Residues 786-807 (YIAFTMYTTCIIWLAFVPIYFG) form a helical membrane-spanning segment. Residues 808-815 (SNYKIITT) are Extracellular-facing. A helical membrane pass occupies residues 816–840 (CFAVSLSVTVALGCMFTPKMYIIIA). The Cytoplasmic portion of the chain corresponds to 841–1199 (KPERNVRSAF…RDYKQSSSTL (359 aa)). S853 is subject to Phosphoserine. T871 is subject to Phosphothreonine. Disordered regions lie at residues 882–906 (GAGN…APKG), 959–1035 (EEDN…QPKS), and 1055–1082 (HAVL…QHLQ). A compositionally biased stretch (polar residues) spans 885–895 (NANSNGKSVSW). Phosphoserine occurs at positions 894 and 969. Residues 1012–1032 (GLPPPLPQQQQQPPPQPPPQQ) show a composition bias toward pro residues. At S1097 the chain carries Phosphoserine. The disordered stretch occupies residues 1118–1177 (VYEREGNTEEDDLEEEEDLPAASKLTPEDSPALTPPSPFRDSVASGSSVPSSPVSESVLC). The segment covering 1125-1136 (TEEDDLEEEEDL) has biased composition (acidic residues). Phosphoserine is present on S1147. Phosphothreonine is present on T1151. S1154 is subject to Phosphoserine. Low complexity predominate over residues 1159 to 1175 (SVASGSSVPSSPVSESV).

Belongs to the G-protein coupled receptor 3 family. As to quaternary structure, homodimer; disulfide-linked. The PPXXF motif binds HOMER1, HOMER2 and HOMER3. Interacts with TAMALIN. Interacts with RYR1, RYR2, ITPR1, SHANK1 and SHANK3. Interacts with SHIA1. Expressed in the striatum (at protein level). Expressed in type II unipolar brush cells of the cerebellum (at protein level).

The protein localises to the cell membrane. Its subcellular location is the postsynaptic cell membrane. It localises to the cell projection. The protein resides in the dendrite. In terms of biological role, G-protein coupled receptor for glutamate. Ligand binding causes a conformation change that triggers signaling via guanine nucleotide-binding proteins (G proteins) and modulates the activity of down-stream effectors. Signaling activates a phosphatidylinositol-calcium second messenger system. May participate in the central action of glutamate in the CNS, such as long-term potentiation in the hippocampus and long-term depression in the cerebellum (By. similarity). May function in the light response in the retina. Induces GRID1 and GRID2 cation-channel activation via GNAQ-PLC-PKC pathway in dopaminergic neurons and cerebellar Purkinje cell, respectively. The sequence is that of Metabotropic glutamate receptor 1 (Grm1) from Mus musculus (Mouse).